We begin with the raw amino-acid sequence, 243 residues long: MIKILIPTAKEMKVCQNIARPKLSAQTKIIIDYFSTLTVSDLEDIYRINTSAARCEAQRWQDFKSKQLTLNPAIKLFNGLMYRNIKRHNLSTSEAQFMENSVFITSALYGIIPAMTLISPHRLDFNTKIKINNNSLKVFWRENYDTFMQSDDIMVSLLSNEFETVFSPKERQKLIHLNFIEDRDGQLKTHSTISKKARGKCLTAMMENNCQTLEHLKQLRFDGFCYDNELSDSKQLTFVKKQT.

The protein belongs to the UPF0246 family.

The protein is UPF0246 protein gbs2036 of Streptococcus agalactiae serotype III (strain NEM316).